Reading from the N-terminus, the 635-residue chain is Sodium-dependent multivitamin transporter (635 aa).

3 consecutive transmembrane segments (helical) span residues 24–44, 68–88, and 101–121; these read FSIM…AIGL, CLPV…ILGV, and FLGC…IPVF. Asn138 carries an N-linked (GlcNAc...) asparagine glycan. 9 consecutive transmembrane segments (helical) span residues 143–163, 176–196, 199–219, 256–276, 297–317, 336–356, 396–416, 428–448, and 456–476; these read VCGT…VLYA, LWLS…LGGL, VIWT…AVII, FWTL…VNQA, VFPF…VMFA, FVLY…GLFI, IMLS…MAYI, ISIF…GMFF, and AVVG…GSIV. Asn489 and Asn498 each carry an N-linked (GlcNAc...) asparagine glycan. A helical transmembrane segment spans residues 528 to 548; it reads LWYSAHNSTTVIVVGLIVSLL.

This sequence belongs to the sodium:solute symporter (SSF) (TC 2.A.21) family. As to quaternary structure, interacts with PDZD11. Post-translationally, may be glycosylated. In terms of tissue distribution, expressed in microvessels of the brain (at protein level). Expressed in heart, brain, placenta, lung, liver, skeletal muscle, kidney, and pancreas.

It localises to the cell membrane. The protein localises to the apical cell membrane. The catalysed reaction is biotin(out) + 2 Na(+)(out) = biotin(in) + 2 Na(+)(in). The enzyme catalyses (R)-pantothenate(out) + 2 Na(+)(out) = (R)-pantothenate(in) + 2 Na(+)(in). It carries out the reaction (R)-lipoate(out) + 2 Na(+)(out) = (R)-lipoate(in) + 2 Na(+)(in). It catalyses the reaction iodide(out) + 2 Na(+)(out) = iodide(in) + 2 Na(+)(in). Its function is as follows. Sodium-dependent multivitamin transporter that mediates the electrogenic transport of pantothenate, biotin, lipoate and iodide. Functions as a Na(+)-coupled substrate symporter where the stoichiometry of Na(+):substrate is 2:1, creating an electrochemical Na(+) gradient used as driving force for substrate uptake. Required for biotin and pantothenate uptake in the intestine across the brush border membrane. Plays a role in the maintenance of intestinal mucosa integrity, by providing the gut mucosa with biotin. Contributes to the luminal uptake of biotin and pantothenate into the brain across the blood-brain barrier. The protein is Sodium-dependent multivitamin transporter of Homo sapiens (Human).